Reading from the N-terminus, the 214-residue chain is tRNA (guanine-N(7)-)-methyltransferase (214 aa).

The S-adenosyl-L-methionine site is built by E44, E69, D96, and D118. Residue D118 is part of the active site. Residues K122, D154, and 191–194 each bind substrate; that span reads TEYE.

It belongs to the class I-like SAM-binding methyltransferase superfamily. TrmB family.

It catalyses the reaction guanosine(46) in tRNA + S-adenosyl-L-methionine = N(7)-methylguanosine(46) in tRNA + S-adenosyl-L-homocysteine. Its pathway is tRNA modification; N(7)-methylguanine-tRNA biosynthesis. Catalyzes the formation of N(7)-methylguanine at position 46 (m7G46) in tRNA. The sequence is that of tRNA (guanine-N(7)-)-methyltransferase from Listeria monocytogenes serovar 1/2a (strain ATCC BAA-679 / EGD-e).